The primary structure comprises 185 residues: Gastrokine-1 (185 aa).

The signal sequence occupies residues 1-20 (MKFTIAFAGLLGVFLTPALA). The region spanning 54–150 (NNGWNSWNAL…MCKGIPTYMA (97 aa)) is the BRICHOS domain. An intrachain disulfide couples Cys81 to Cys142.

The protein belongs to the gastrokine family. In terms of tissue distribution, highly expressed specifically in surface cells of the antrum mucosa from where it is secreted.

It localises to the secreted. The protein localises to the cytoplasmic granule. It is found in the golgi apparatus. In terms of biological role, has mitogenic activity and may be involved in maintaining the integrity of the gastric mucosal epithelium. The chain is Gastrokine-1 (GKN1) from Sus scrofa (Pig).